Consider the following 268-residue polypeptide: Peptide transport system ATP-binding protein SapF (268 aa).

An ABC transporter domain is found at 6-251 (LEVRNLSKTF…PLHELTKRLI (246 aa)). Residue 47–54 (GENGSGKS) coordinates ATP.

This sequence belongs to the ABC transporter superfamily.

It localises to the cell inner membrane. Functionally, involved in a peptide intake transport system that plays a role in the resistance to antimicrobial peptides. This chain is Peptide transport system ATP-binding protein SapF (sapF), found in Escherichia coli O6:H1 (strain CFT073 / ATCC 700928 / UPEC).